Consider the following 561-residue polypeptide: MPSNESTCLGSDRNMQTAWKLNASTPGFTPKKLRVVCIGAGLSGLTLAYKLKHERPMDFVDLRIYEKNHEVGGTWLDNVYPGVGCDIPSPSYVFPFEPNPDWSKFYVGGAEIQQYILRTTAKYGLKERIVFNTRLLKAEWNEDSAKWKLQLEQDGRVFDDETDVLINGTGCLSQWKWPDIEGLDCFKGKLLHSARWDPEYNWEGKRIAVIGNGSSALQLVPSLQPKAAKLVNYIRHPTWVSVNFCPDLTRDGMGSNFEFTEEEKQQFRDDPEMFFQYRKKVEHGVNTVLQMMISGSGEHKFLHETVEGLMRQRLADRPDLIDKMIPNYEIGCRRLSPGDGYLEALQAANARPSFANINRITPTGFETDEGEEEFDLIACATGFNTSYIPPFKMTGRGGRRLDVEWKDKPAAYFATCAAGFPNYFIFAGPNAPIGHGSVNRMIWFQADYMLNWVEKIATEDIRSVAVKDSAVRDFNEFAKENLKRFVWSKGCHAWYSKKTDGEDNIVTAMYPGSLLHFKVYLDKIRGEHFDIQYNTSNMFGFLGNGELALEREKDGDMAFYM.

Residues 74–77 (TWLD), 86–87 (DI), and Y92 contribute to the FAD site. An NADP(+)-binding site is contributed by 84 to 86 (GCD). NADP(+) contacts are provided by residues 212–218 (NGSSALQ) and 235–236 (RH).

Belongs to the FAD-binding monooxygenase family. It depends on FAD as a cofactor.

Its pathway is secondary metabolite biosynthesis. FAD-binding monooxygenase; part of the gene cluster that mediates the biosynthesis of azaterrilone A and other azaphilones, a class of fungal metabolites characterized by a highly oxygenated pyrano-quinone bicyclic core and exhibiting a broad range of bioactivities. The first step of the pathway begins with the non-reducing polyketide synthase tazA that assembles one acetyl-CoA starter unit, five malonyl-CoA units, and catalyzes a series of Claisen condensations, methylation, PT-mediated cyclization, and finally releases the first hexaketide precursor through the R-domain. The tazA product then undergoes reduction on its terminal ketone and the following pyran-ring formation by yet undetermined enzyme(s). Dehydration and enoyl reduction, possibly involving the trans-enoyl reductase tazE leads to the next intermediate. TazD is predicted as an acetyltransferase and might catalyze the acetylation steps leading to the synthesis of azaterrilone A. Azaterrilone A is not the final product of the taz pathway and both the highly reducing polyketide synthase tazB and the dual enzyme tazHJ catalyze late steps of the pathway, leading to the production of the 2 final stereoisomers that contain additional polyketide modification whose structures have still to be determined. This chain is FAD-binding monooxygenase tazF, found in Aspergillus terreus (strain NIH 2624 / FGSC A1156).